A 217-amino-acid chain; its full sequence is Pyridoxine/pyridoxamine 5'-phosphate oxidase (217 aa).

Residues 13 to 16 and Lys-71 each bind substrate; that span reads RREY. Residues 66 to 71, 81 to 82, Arg-87, Lys-88, and Gln-110 contribute to the FMN site; these read RIVLLK and YT. Tyr-128, Arg-132, and Ser-136 together coordinate substrate. FMN-binding positions include 145–146 and Trp-190; that span reads QS. 196–198 lines the substrate pocket; it reads RLH. Arg-200 is an FMN binding site.

It belongs to the pyridoxamine 5'-phosphate oxidase family. In terms of assembly, homodimer. Requires FMN as cofactor.

The enzyme catalyses pyridoxamine 5'-phosphate + O2 + H2O = pyridoxal 5'-phosphate + H2O2 + NH4(+). It carries out the reaction pyridoxine 5'-phosphate + O2 = pyridoxal 5'-phosphate + H2O2. It functions in the pathway cofactor metabolism; pyridoxal 5'-phosphate salvage; pyridoxal 5'-phosphate from pyridoxamine 5'-phosphate: step 1/1. Its pathway is cofactor metabolism; pyridoxal 5'-phosphate salvage; pyridoxal 5'-phosphate from pyridoxine 5'-phosphate: step 1/1. Catalyzes the oxidation of either pyridoxine 5'-phosphate (PNP) or pyridoxamine 5'-phosphate (PMP) into pyridoxal 5'-phosphate (PLP). The polypeptide is Pyridoxine/pyridoxamine 5'-phosphate oxidase (Proteus mirabilis (strain HI4320)).